The sequence spans 430 residues: Delta(14)-sterol reductase (430 aa).

The next 6 helical transmembrane spans lie at 12 to 32 (IGTG…HFLI), 67 to 87 (LAVA…PAEI), 109 to 129 (FLVF…TWWF), 230 to 250 (FVSD…VDAL), 267 to 287 (LGVM…CLQA), and 290 to 310 (LASF…AVQF). Residues lysine 323, arginine 327, leucine 350, tryptophan 355, and 362 to 363 (NY) contribute to the NADP(+) site. The next 2 membrane-spanning stretches (helical) occupy residues 349-369 (LLIS…DWIM) and 376-396 (TTGF…ILLL). NADP(+)-binding positions include aspartate 402, 406–410 (CREKY), and tyrosine 417.

Belongs to the ERG4/ERG24 family.

The protein localises to the membrane. It carries out the reaction 4,4-dimethyl-5alpha-cholesta-8,24-dien-3beta-ol + NADP(+) = 4,4-dimethyl-5alpha-cholesta-8,14,24-trien-3beta-ol + NADPH + H(+). Its pathway is steroid biosynthesis; zymosterol biosynthesis; zymosterol from lanosterol: step 2/6. Functionally, reduces the C14=C15 double bond of 4,4-dimethyl-cholesta-8,14,24-trienol to produce 4,4-dimethyl-cholesta-8,24-dienol. This chain is Delta(14)-sterol reductase (ERG3), found in Ascobolus immersus.